The following is a 501-amino-acid chain: ATP synthase subunit alpha (501 aa).

169-176 (GDRQTGKT) provides a ligand contact to ATP.

This sequence belongs to the ATPase alpha/beta chains family. F-type ATPases have 2 components, CF(1) - the catalytic core - and CF(0) - the membrane proton channel. CF(1) has five subunits: alpha(3), beta(3), gamma(1), delta(1), epsilon(1). CF(0) has three main subunits: a(1), b(2) and c(9-12). The alpha and beta chains form an alternating ring which encloses part of the gamma chain. CF(1) is attached to CF(0) by a central stalk formed by the gamma and epsilon chains, while a peripheral stalk is formed by the delta and b chains.

Its subcellular location is the cell membrane. The catalysed reaction is ATP + H2O + 4 H(+)(in) = ADP + phosphate + 5 H(+)(out). Its function is as follows. Produces ATP from ADP in the presence of a proton gradient across the membrane. The alpha chain is a regulatory subunit. This is ATP synthase subunit alpha from Desulforamulus reducens (strain ATCC BAA-1160 / DSM 100696 / MI-1) (Desulfotomaculum reducens).